A 359-amino-acid chain; its full sequence is Protein mab-21-like 2-B (359 aa).

The protein belongs to the mab-21 family.

Its subcellular location is the nucleus. The protein resides in the cytoplasm. Required for several aspects of embryonic development including normal development of the eye. This Xenopus laevis (African clawed frog) protein is Protein mab-21-like 2-B (mab21l2-b).